The primary structure comprises 273 residues: Manganese catalase (273 aa).

Glu35 is a Mn(2+) binding site. Ca(2+)-binding residues include Asp57 and Asp61. Mn(2+) contacts are provided by Glu66, His69, Glu149, and His182. Residues Asn220, Ser222, and Gly224 each coordinate Ca(2+). Residues 254–273 (EKPELKPAPPFVHNTLPGRE) are disordered.

It belongs to the manganese catalase family. It depends on Ca(2+) as a cofactor. The cofactor is Mn(2+).

The enzyme catalyses 2 H2O2 = O2 + 2 H2O. Its function is as follows. Catalyzes the decomposition of hydrogen peroxide into water and oxygen. The polypeptide is Manganese catalase (ydbD) (Bacillus subtilis (strain 168)).